The sequence spans 498 residues: Cytoskeletal signaling protein slm1 (498 aa).

The interval 1–23 (MELSGKSEFPTRTEIPNQASNGD) is disordered. 2 positions are modified to phosphoserine: serine 175 and serine 312. One can recognise a PH domain in the interval 300-405 (VPIMAGYLIR…WWEALNTHIA (106 aa)). A disordered region spans residues 416 to 475 (ANGPSAVSDSDDDDDDPNDFRPAVERQSSTMNTRMSQPSSAVNTNRSYGSEQIPSYADSQ). Over residues 441-475 (RQSSTMNTRMSQPSSAVNTNRSYGSEQIPSYADSQ) the composition is skewed to polar residues.

It localises to the cell tip. Effector of the TORC2- and calcineurin-signaling pathways. Mediates actin polarization via inhibition of calcineurin-dependent transcription. May play a role in the response to the disruption of sphingolipid synthesis, where dephosphorylation of slm1 leads to the activation and phosphorylation of ypk1 through the TORC2 and PKH1 pathways, which in turn phosphorylates orm1 and lag1 to activate sphingolipid synthesis. The protein is Cytoskeletal signaling protein slm1 (slm1) of Schizosaccharomyces pombe (strain 972 / ATCC 24843) (Fission yeast).